Here is a 290-residue protein sequence, read N- to C-terminus: MELRYLRYFVAVAEARNFTRAAHDLGISQPPLSQQIQRLEREIGTPLLRRLTRGVELTEAGESFYVDACQILALSDAALEKTKGIARGMNGSLVPGITSSAAFHSQIFSLLYQFQQRYPAVALRQVEGNMATLMHALGEAELDIAFVRLPCESSKAFNLRIIAEEPMVIALHRSHPLSGESALSLAQLSDAVPVIFPPEVAPGLYEQVYDGCRRAGVDMSRARQSSQISSSISMVDAGFGFALVPQSMTCICLPNVTWHPLQDASLKTEIAIAWRRFERSRTVKRFLEMF.

The 58-residue stretch at 1 to 58 (MELRYLRYFVAVAEARNFTRAAHDLGISQPPLSQQIQRLEREIGTPLLRRLTRGVELT) folds into the HTH lysR-type domain. A DNA-binding region (H-T-H motif) is located at residues 18–37 (FTRAAHDLGISQPPLSQQIQ).

The protein belongs to the LysR transcriptional regulatory family.

In terms of biological role, regulator of the budABC operon for 2,3-butanediol synthesis. In Raoultella terrigena (Klebsiella terrigena), this protein is HTH-type transcriptional regulator BudR (budR).